A 503-amino-acid chain; its full sequence is Pentatricopeptide repeat-containing protein At2g30100, chloroplastic (503 aa).

Residues 1–50 (MAYAHVFASLTISTISLRRFLPRLHRNHSVKPNSRIICNLKLNYSAGKFR) constitute a chloroplast transit peptide. 3 PPR repeats span residues 341 to 375 (IGVVHERLLAMYICAGRGPEAEKQLWKMKLAGREP), 376 to 410 (EADLHDIVMAICASQKEVNAVSRLLTRVEFMGSQR), and 411 to 445 (KKKTLSWLLRGYVKGGHFEEAAETLVSMIDSGLHP).

It belongs to the PPR family. P subfamily.

Its subcellular location is the plastid. It localises to the chloroplast. This Arabidopsis thaliana (Mouse-ear cress) protein is Pentatricopeptide repeat-containing protein At2g30100, chloroplastic.